The sequence spans 121 residues: MIQQETYLTVADNSGAKRLQCIRVLGSNRRYAHVGDVVVASVKDALPNMGVKKSDVVKAVIVRTRHTLRRNTGNSIRFDDNAAVLINEDKNPKGTRVFGPVARELRDKNFTKIVSLAPEVI.

The protein belongs to the universal ribosomal protein uL14 family. In terms of assembly, part of the 50S ribosomal subunit. Forms a cluster with proteins L3 and L19. In the 70S ribosome, L14 and L19 interact and together make contacts with the 16S rRNA in bridges B5 and B8.

Binds to 23S rRNA. Forms part of two intersubunit bridges in the 70S ribosome. This is Large ribosomal subunit protein uL14 from Prochlorococcus marinus (strain MIT 9515).